A 101-amino-acid polypeptide reads, in one-letter code: NADH-quinone oxidoreductase subunit K (101 aa).

Helical transmembrane passes span 4-24 (LEHY…GLFL), 30-50 (IVLL…LVAF), and 65-85 (FVLT…VCFF).

The protein belongs to the complex I subunit 4L family. As to quaternary structure, NDH-1 is composed of 14 different subunits. Subunits NuoA, H, J, K, L, M, N constitute the membrane sector of the complex.

The protein resides in the cell inner membrane. It catalyses the reaction a quinone + NADH + 5 H(+)(in) = a quinol + NAD(+) + 4 H(+)(out). Its function is as follows. NDH-1 shuttles electrons from NADH, via FMN and iron-sulfur (Fe-S) centers, to quinones in the respiratory chain. The immediate electron acceptor for the enzyme in this species is believed to be ubiquinone. Couples the redox reaction to proton translocation (for every two electrons transferred, four hydrogen ions are translocated across the cytoplasmic membrane), and thus conserves the redox energy in a proton gradient. The sequence is that of NADH-quinone oxidoreductase subunit K from Ruegeria pomeroyi (strain ATCC 700808 / DSM 15171 / DSS-3) (Silicibacter pomeroyi).